We begin with the raw amino-acid sequence, 86 residues long: uncharacterized protein (86 aa).

3 helical membrane-spanning segments follow: residues 4–24 (ILIIAEYTLLASLAVFSIAAV), 34–54 (MGLVGISGLNIAIATILILIN), and 64–84 (DIAYALVLLGPVGTIAFARVL).

This sequence to M.jannaschii MJ1223.

The protein resides in the cell membrane. This is an uncharacterized protein from Methanothermobacter thermautotrophicus (strain ATCC 29096 / DSM 1053 / JCM 10044 / NBRC 100330 / Delta H) (Methanobacterium thermoautotrophicum).